We begin with the raw amino-acid sequence, 545 residues long: Glucose-6-phosphate isomerase (545 aa).

The active-site Proton donor is the E351. Residues H382 and K510 contribute to the active site.

It belongs to the GPI family.

It is found in the cytoplasm. The enzyme catalyses alpha-D-glucose 6-phosphate = beta-D-fructose 6-phosphate. Its pathway is carbohydrate biosynthesis; gluconeogenesis. It participates in carbohydrate degradation; glycolysis; D-glyceraldehyde 3-phosphate and glycerone phosphate from D-glucose: step 2/4. Catalyzes the reversible isomerization of glucose-6-phosphate to fructose-6-phosphate. The protein is Glucose-6-phosphate isomerase of Shewanella denitrificans (strain OS217 / ATCC BAA-1090 / DSM 15013).